Reading from the N-terminus, the 252-residue chain is Triosephosphate isomerase (252 aa).

Residue Asn-10–Lys-12 participates in substrate binding. His-96 serves as the catalytic Electrophile. The active-site Proton acceptor is the Glu-168. Substrate is bound by residues Gly-174, Ser-214, and Gly-235–Gly-236.

The protein belongs to the triosephosphate isomerase family. Homodimer.

The protein localises to the cytoplasm. It catalyses the reaction D-glyceraldehyde 3-phosphate = dihydroxyacetone phosphate. It participates in carbohydrate biosynthesis; gluconeogenesis. It functions in the pathway carbohydrate degradation; glycolysis; D-glyceraldehyde 3-phosphate from glycerone phosphate: step 1/1. Functionally, involved in the gluconeogenesis. Catalyzes stereospecifically the conversion of dihydroxyacetone phosphate (DHAP) to D-glyceraldehyde-3-phosphate (G3P). This chain is Triosephosphate isomerase, found in Streptococcus pyogenes serotype M6 (strain ATCC BAA-946 / MGAS10394).